Reading from the N-terminus, the 296-residue chain is Bifunctional protein FolD (296 aa).

NADP(+) contacts are provided by residues 166-168 (GRS), serine 195, and threonine 236.

This sequence belongs to the tetrahydrofolate dehydrogenase/cyclohydrolase family. As to quaternary structure, homodimer.

The enzyme catalyses (6R)-5,10-methylene-5,6,7,8-tetrahydrofolate + NADP(+) = (6R)-5,10-methenyltetrahydrofolate + NADPH. The catalysed reaction is (6R)-5,10-methenyltetrahydrofolate + H2O = (6R)-10-formyltetrahydrofolate + H(+). Its pathway is one-carbon metabolism; tetrahydrofolate interconversion. Functionally, catalyzes the oxidation of 5,10-methylenetetrahydrofolate to 5,10-methenyltetrahydrofolate and then the hydrolysis of 5,10-methenyltetrahydrofolate to 10-formyltetrahydrofolate. The polypeptide is Bifunctional protein FolD (Dehalococcoides mccartyi (strain ATCC BAA-2266 / KCTC 15142 / 195) (Dehalococcoides ethenogenes (strain 195))).